The sequence spans 288 residues: Putative transcription factor kapC (288 aa).

A compositionally biased stretch (pro residues) spans 1-10; that stretch reads MQPTLAPAPH. Residues 1 to 121 form a disordered region; that stretch reads MQPTLAPAPH…AAQRAFRQRK (121 aa). Low complexity predominate over residues 26-41; that stretch reads HDQLLAAHQHLSHPQQ. The span at 42 to 54 shows a compositional bias: pro residues; it reads ARPPPPPPQPPHM. Polar residues predominate over residues 84–93; sequence QPDLSGQESP. A bZIP domain is found at 100-163; it reads PLSTSKRAAQ…EYIINLQSRL (64 aa). Residues 101–124 are basic motif; the sequence is LSTSKRAAQNRAAQRAFRQRKEAH. The segment covering 106 to 116 has biased composition (low complexity); that stretch reads RAAQNRAAQRA. A leucine-zipper region spans residues 128–159; it reads LEGKVKAYETMGEAIKALQAENYQLREYIINL. 2 disordered regions span residues 172-226 and 242-288; these read ELPG…NDDM and PPTE…PLIS. Residues 202–212 are compositionally biased toward pro residues; it reads PVPPPTAPQQP. The span at 213–222 shows a compositional bias: low complexity; it reads QPAQNQASAP.

This sequence belongs to the bZIP family.

It is found in the nucleus. Its function is as follows. Putative transcription factor. The protein is Putative transcription factor kapC (kapC) of Aspergillus clavatus (strain ATCC 1007 / CBS 513.65 / DSM 816 / NCTC 3887 / NRRL 1 / QM 1276 / 107).